The following is a 208-amino-acid chain: Large ribosomal subunit protein uL3 (208 aa).

The residue at position 149 (Gln149) is an N5-methylglutamine.

This sequence belongs to the universal ribosomal protein uL3 family. In terms of assembly, part of the 50S ribosomal subunit. Forms a cluster with proteins L14 and L19. Methylated by PrmB.

Its function is as follows. One of the primary rRNA binding proteins, it binds directly near the 3'-end of the 23S rRNA, where it nucleates assembly of the 50S subunit. This Actinobacillus pleuropneumoniae serotype 5b (strain L20) protein is Large ribosomal subunit protein uL3.